A 1087-amino-acid chain; its full sequence is MDLYSTPAAALDRFVARRLQPRKEFVEKARRALGALAAALRERGGRLGAAAPRVLKTVKGGSSGRGTALKGGCDSELVIFLDCFKSYVDQRARRAEILSEMRASLESWWQNPVPGLRLTFPEQSVPGALQFRLTSVDLEDWMDVSLVPAFNVLGQAGSGVKPKPQVYSTLLNSGCQGGEHAACFTELRRNFVNIRPAKLKNLILLVKHWYHQVCLQGLWKETLPPVYALELLTIFAWEQGCKKDAFSLAEGLRTVLGLIQQHQHLCVFWTVNYGFEDPAVGQFLQRQLKRPRPVILDPADPTWDLGNGAAWHWDLLAQEAASCYDHPCFLRGMGDPVQSWKGPGLPRAGCSGLGHPIQLDPNQKTPENSKSLNAVYPRAGSKPPSCPAPGPTGAASIVPSVPGMALDLSQIPTKELDRFIQDHLKPSPQFQEQVKKAIDIILRCLHENCVHKASRVSKGGSFGRGTDLRDGCDVELIIFLNCFTDYKDQGPRRAEILDEMRAQLESWWQDQVPSLSLQFPEQNVPEALQFQLVSTALKSWTDVSLLPAFDAVGQLSSGTKPNPQVYSRLLTSGCQEGEHKACFAELRRNFMNIRPVKLKNLILLVKHWYRQVAAQNKGKGPAPASLPPAYALELLTIFAWEQGCRQDCFNMAQGFRTVLGLVQQHQQLCVYWTVNYSTEDPAMRMHLLGQLRKPRPLVLDPADPTWNVGHGSWELLAQEAAALGMQACFLSRDGTSVQPWDVMPALLYQTPAGDLDKFISEFLQPNRQFLAQVNKAVDTICSFLKENCFRNSPIKVIKVVKGGSSAKGTALRGRSDADLVVFLSCFSQFTEQGNKRAEIISEIRAQLEACQQERQFEVKFEVSKWENPRVLSFSLTSQTMLDQSVDFDVLPAFDALGQLVSGSRPSSQVYVDLIHSYSNAGEYSTCFTELQRDFIISRPTKLKSLIRLVKHWYQQCTKISKGRGSLPPQHGLELLTVYAWEQGGKDSQFNMAEGFRTVLELVTQYRQLCIYWTINYNAKDKTVGDFLKQQLQKPRPIILDPADPTGNLGHNARWDLLAKEAAACTSALCCMGRNGIPIQPWPVKAAV.

At Met1 the chain carries N-acetylmethionine. The tract at residues 6–343 (TPAAALDRFV…GDPVQSWKGP (338 aa)) is OAS domain 1. Interaction with dsRNA stretches follow at residues 12–57 (DRFV…VLKT) and 186–200 (ELRR…AKLK). Residues 344–410 (GLPRAGCSGL…VPGMALDLSQ (67 aa)) are linker. Position 365 is a phosphothreonine (Thr365). OAS domain stretches follow at residues 411–742 (IPTK…PWDV) and 750–1084 (TPAG…WPVK). Ser804 provides a ligand contact to ATP. Asp816, Asp818, and Asp888 together coordinate Mg(2+). Positions 947, 950, and 969 each coordinate ATP.

The protein belongs to the 2-5A synthase family. As to quaternary structure, monomer. Requires Mg(2+) as cofactor. As to expression, present at high level in placenta trophoblast.

It localises to the cytoplasm. It is found in the nucleus. It catalyses the reaction 3 ATP = 5'-triphosphoadenylyl-(2'-&gt;5')-adenylyl-(2'-&gt;5')-adenosine + 2 diphosphate. With respect to regulation, produced as a latent enzyme which is activated by dsRNA generated during the course of viral infection. Strongly activated by long dsRNAs at least 50 nucleotides in length. ssRNA does not activate the enzyme. Its function is as follows. Interferon-induced, dsRNA-activated antiviral enzyme which plays a critical role in cellular innate antiviral response. In addition, it may also play a role in other cellular processes such as apoptosis, cell growth, differentiation and gene regulation. Synthesizes preferentially dimers of 2'-5'-oligoadenylates (2-5A) from ATP which then bind to the inactive monomeric form of ribonuclease L (RNase L) leading to its dimerization and subsequent activation. Activation of RNase L leads to degradation of cellular as well as viral RNA, resulting in the inhibition of protein synthesis, thus terminating viral replication. Can mediate the antiviral effect via the classical RNase L-dependent pathway or an alternative antiviral pathway independent of RNase L. Displays antiviral activity against Chikungunya virus (CHIKV), Dengue virus, Sindbis virus (SINV) and Semliki forest virus (SFV). This chain is 2'-5'-oligoadenylate synthase 3 (OAS3), found in Homo sapiens (Human).